Consider the following 180-residue polypeptide: Large ribosomal subunit protein uL6 (180 aa).

This sequence belongs to the universal ribosomal protein uL6 family. In terms of assembly, part of the 50S ribosomal subunit.

Functionally, this protein binds to the 23S rRNA, and is important in its secondary structure. It is located near the subunit interface in the base of the L7/L12 stalk, and near the tRNA binding site of the peptidyltransferase center. The protein is Large ribosomal subunit protein uL6 of Anaeromyxobacter dehalogenans (strain 2CP-C).